The following is a 413-amino-acid chain: Serine hydroxymethyltransferase (413 aa).

Residues Leu-119 and 123–125 (GHL) contribute to the (6S)-5,6,7,8-tetrahydrofolate site. An N6-(pyridoxal phosphate)lysine modification is found at Lys-228.

This sequence belongs to the SHMT family. Homodimer. Requires pyridoxal 5'-phosphate as cofactor.

The protein localises to the cytoplasm. It carries out the reaction (6R)-5,10-methylene-5,6,7,8-tetrahydrofolate + glycine + H2O = (6S)-5,6,7,8-tetrahydrofolate + L-serine. It functions in the pathway one-carbon metabolism; tetrahydrofolate interconversion. Its pathway is amino-acid biosynthesis; glycine biosynthesis; glycine from L-serine: step 1/1. Functionally, catalyzes the reversible interconversion of serine and glycine with tetrahydrofolate (THF) serving as the one-carbon carrier. This reaction serves as the major source of one-carbon groups required for the biosynthesis of purines, thymidylate, methionine, and other important biomolecules. Also exhibits THF-independent aldolase activity toward beta-hydroxyamino acids, producing glycine and aldehydes, via a retro-aldol mechanism. In Caldanaerobacter subterraneus subsp. tengcongensis (strain DSM 15242 / JCM 11007 / NBRC 100824 / MB4) (Thermoanaerobacter tengcongensis), this protein is Serine hydroxymethyltransferase.